Here is a 477-residue protein sequence, read N- to C-terminus: Ribulose bisphosphate carboxylase large chain (477 aa).

A propeptide spanning residues 1–2 is cleaved from the precursor; sequence MS. Position 3 is an N-acetylproline (proline 3). An N6,N6,N6-trimethyllysine modification is found at lysine 14. Positions 123 and 173 each coordinate substrate. The active-site Proton acceptor is lysine 175. A substrate-binding site is contributed by lysine 177. Positions 201, 203, and 204 each coordinate Mg(2+). The residue at position 201 (lysine 201) is an N6-carboxylysine. The active-site Proton acceptor is the histidine 294. Positions 295, 327, and 379 each coordinate substrate.

This sequence belongs to the RuBisCO large chain family. Type I subfamily. In terms of assembly, heterohexadecamer of 8 large chains and 8 small chains; disulfide-linked. The disulfide link is formed within the large subunit homodimers. Mg(2+) serves as cofactor. The disulfide bond which can form in the large chain dimeric partners within the hexadecamer appears to be associated with oxidative stress and protein turnover.

Its subcellular location is the plastid. The protein resides in the chloroplast. The catalysed reaction is 2 (2R)-3-phosphoglycerate + 2 H(+) = D-ribulose 1,5-bisphosphate + CO2 + H2O. The enzyme catalyses D-ribulose 1,5-bisphosphate + O2 = 2-phosphoglycolate + (2R)-3-phosphoglycerate + 2 H(+). RuBisCO catalyzes two reactions: the carboxylation of D-ribulose 1,5-bisphosphate, the primary event in carbon dioxide fixation, as well as the oxidative fragmentation of the pentose substrate in the photorespiration process. Both reactions occur simultaneously and in competition at the same active site. The protein is Ribulose bisphosphate carboxylase large chain of Carthamus tinctorius (Safflower).